Reading from the N-terminus, the 252-residue chain is Glucosamine-6-phosphate deaminase (252 aa).

The active-site Proton acceptor; for enolization step is Asp-64. Asn-130 functions as the For ring-opening step in the catalytic mechanism. His-132 (proton acceptor; for ring-opening step) is an active-site residue. Glu-137 (for ring-opening step) is an active-site residue.

Belongs to the glucosamine/galactosamine-6-phosphate isomerase family. NagB subfamily.

The enzyme catalyses alpha-D-glucosamine 6-phosphate + H2O = beta-D-fructose 6-phosphate + NH4(+). The protein operates within amino-sugar metabolism; N-acetylneuraminate degradation; D-fructose 6-phosphate from N-acetylneuraminate: step 5/5. Functionally, catalyzes the reversible isomerization-deamination of glucosamine 6-phosphate (GlcN6P) to form fructose 6-phosphate (Fru6P) and ammonium ion. In Exiguobacterium sibiricum (strain DSM 17290 / CCUG 55495 / CIP 109462 / JCM 13490 / 255-15), this protein is Glucosamine-6-phosphate deaminase.